Here is a 284-residue protein sequence, read N- to C-terminus: Nucleotide-binding protein Teth39_0666 (284 aa).

8-15 serves as a coordination point for ATP; it reads GLSGAGKT. 58–61 contributes to the GTP binding site; it reads DLRG.

It belongs to the RapZ-like family.

Functionally, displays ATPase and GTPase activities. In Thermoanaerobacter pseudethanolicus (strain ATCC 33223 / 39E) (Clostridium thermohydrosulfuricum), this protein is Nucleotide-binding protein Teth39_0666.